Here is a 1270-residue protein sequence, read N- to C-terminus: DNA-directed RNA polymerase subunit beta (1270 aa).

The protein belongs to the RNA polymerase beta chain family. In terms of assembly, the RNAP catalytic core consists of 2 alpha, 1 beta, 1 beta' and 1 omega subunit. When a sigma factor is associated with the core the holoenzyme is formed, which can initiate transcription.

The enzyme catalyses RNA(n) + a ribonucleoside 5'-triphosphate = RNA(n+1) + diphosphate. In terms of biological role, DNA-dependent RNA polymerase catalyzes the transcription of DNA into RNA using the four ribonucleoside triphosphates as substrates. The chain is DNA-directed RNA polymerase subunit beta from Bacteroides thetaiotaomicron (strain ATCC 29148 / DSM 2079 / JCM 5827 / CCUG 10774 / NCTC 10582 / VPI-5482 / E50).